A 179-amino-acid polypeptide reads, in one-letter code: Putative 5'(3')-deoxyribonucleotidase (179 aa).

The active-site Nucleophile is D9. 3 residues coordinate Mg(2+): D9, D11, and D135. Catalysis depends on D11, which acts as the Proton donor.

It belongs to the 5'(3')-deoxyribonucleotidase family. Mg(2+) is required as a cofactor.

Its function is as follows. Dephosphorylates the 5' and 2'(3')-phosphates of deoxyribonucleotides. The protein is Putative 5'(3')-deoxyribonucleotidase of Staphylococcus epidermidis (strain ATCC 35984 / DSM 28319 / BCRC 17069 / CCUG 31568 / BM 3577 / RP62A).